The sequence spans 520 residues: Transposase for insertion sequence element IS21-like (520 aa).

Positions 13–78 constitute an HTH IS21-type domain; sequence YMWYKVRELQ…KYEEYVRGTL (66 aa). Positions 136 to 312 constitute an Integrase catalytic domain; it reads LPETPYGEYA…VPSEEFAVEK (177 aa).

The protein belongs to the transposase IS21/IS408/IS1162 family.

Involved in the transposition of the insertion sequence. The chain is Transposase for insertion sequence element IS21-like (tnpA) from Bacteroides fragilis.